The primary structure comprises 200 residues: Tegument protein UL55 homolog (200 aa).

Over residues 1–20 (MLPANRAEHSSDAEPRDIGS) the composition is skewed to basic and acidic residues. The interval 1 to 23 (MLPANRAEHSSDAEPRDIGSHGR) is disordered.

This sequence belongs to the alphaherpesvirinae HHV-1 UL55 family.

It localises to the virion tegument. The protein resides in the host nucleus matrix. This is Tegument protein UL55 homolog from Equine herpesvirus 1 (strain Ab4p) (EHV-1).